Here is a 56-residue protein sequence, read N- to C-terminus: Small ribosomal subunit protein uS14 (56 aa).

Zn(2+) is bound by residues cysteine 21, cysteine 24, cysteine 39, and cysteine 42.

It belongs to the universal ribosomal protein uS14 family. Component of the 40S small ribosomal subunit. It depends on Zn(2+) as a cofactor.

The protein resides in the cytoplasm. Its subcellular location is the cytosol. The protein localises to the rough endoplasmic reticulum. This Bombyx mori (Silk moth) protein is Small ribosomal subunit protein uS14 (RpS29).